A 492-amino-acid chain; its full sequence is 3-octaprenyl-4-hydroxybenzoate carboxy-lyase (492 aa).

Asparagine 177 provides a ligand contact to Mn(2+). Prenylated FMN is bound by residues 180-182, 194-196, and 199-200; these read IYR, RWL, and RG. Glutamate 243 serves as a coordination point for Mn(2+). The active-site Proton donor is aspartate 292.

It belongs to the UbiD family. Homohexamer. Prenylated FMN serves as cofactor. Mn(2+) is required as a cofactor.

The protein localises to the cell membrane. The catalysed reaction is a 4-hydroxy-3-(all-trans-polyprenyl)benzoate + H(+) = a 2-(all-trans-polyprenyl)phenol + CO2. Its pathway is cofactor biosynthesis; ubiquinone biosynthesis. Its function is as follows. Catalyzes the decarboxylation of 3-octaprenyl-4-hydroxy benzoate to 2-octaprenylphenol, an intermediate step in ubiquinone biosynthesis. This Neisseria gonorrhoeae (strain ATCC 700825 / FA 1090) protein is 3-octaprenyl-4-hydroxybenzoate carboxy-lyase.